The following is a 466-amino-acid chain: GTP cyclohydrolase 1 (466 aa).

Residues Cys-342, His-345, and Cys-416 each contribute to the Zn(2+) site.

Belongs to the GTP cyclohydrolase I family. As to quaternary structure, homodimer.

It catalyses the reaction GTP + H2O = 7,8-dihydroneopterin 3'-triphosphate + formate + H(+). It functions in the pathway cofactor biosynthesis; 7,8-dihydroneopterin triphosphate biosynthesis; 7,8-dihydroneopterin triphosphate from GTP: step 1/1. In terms of biological role, GTP cyclohydrolase 1 is the first enzyme in the biosynthetic pathway leading to folic acid. The protein is GTP cyclohydrolase 1 (GCH1) of Arabidopsis thaliana (Mouse-ear cress).